Consider the following 422-residue polypeptide: Keratan-sulfate endo-1,4-beta-galactosidase (422 aa).

The N-terminal stretch at 1-46 is a signal peptide; the sequence is MRKTKFWLVLSLIATSLSIFACKKDSTATKNPIPEVSKAKASTKLL. In terms of domain architecture, GH16 spans 47–292; that stretch reads NATTVATTDY…YVRVYKLPLF (246 aa). The active-site Nucleophile is the Glu171. Glu176 serves as the catalytic Proton donor. The CBM-cenC domain maps to 291-406; the sequence is LFSNGDFESG…NTTATVYFYK (116 aa).

The protein belongs to the glycosyl hydrolase 16 family.

The protein resides in the secreted. It carries out the reaction Endohydrolysis of (1-&gt;4)-beta-D-galactosidic linkages in keratan sulfate.. Functionally, hydrolyzes internal endo-beta-galactosyl linkages in keratan sulfate and in various neolacto-type glycosphingolipids, producing sulfated and non-sulfated disaccharides, and glucosylceramides respectivly. The sequence is that of Keratan-sulfate endo-1,4-beta-galactosidase from Sphingobacterium multivorum.